The sequence spans 211 residues: ATP phosphoribosyltransferase (211 aa).

Belongs to the ATP phosphoribosyltransferase family. Short subfamily. As to quaternary structure, heteromultimer composed of HisG and HisZ subunits.

It is found in the cytoplasm. It catalyses the reaction 1-(5-phospho-beta-D-ribosyl)-ATP + diphosphate = 5-phospho-alpha-D-ribose 1-diphosphate + ATP. The protein operates within amino-acid biosynthesis; L-histidine biosynthesis; L-histidine from 5-phospho-alpha-D-ribose 1-diphosphate: step 1/9. In terms of biological role, catalyzes the condensation of ATP and 5-phosphoribose 1-diphosphate to form N'-(5'-phosphoribosyl)-ATP (PR-ATP). Has a crucial role in the pathway because the rate of histidine biosynthesis seems to be controlled primarily by regulation of HisG enzymatic activity. This chain is ATP phosphoribosyltransferase, found in Pseudomonas putida (strain ATCC 700007 / DSM 6899 / JCM 31910 / BCRC 17059 / LMG 24140 / F1).